The chain runs to 250 residues: Triosephosphate isomerase (250 aa).

Residue 9-11 participates in substrate binding; the sequence is NWK. His-95 functions as the Electrophile in the catalytic mechanism. Glu-167 acts as the Proton acceptor in catalysis. Residues Gly-173, Ser-213, and 234–235 contribute to the substrate site; that span reads GG.

Belongs to the triosephosphate isomerase family. Homodimer.

Its subcellular location is the cytoplasm. It carries out the reaction D-glyceraldehyde 3-phosphate = dihydroxyacetone phosphate. It participates in carbohydrate biosynthesis; gluconeogenesis. Its pathway is carbohydrate degradation; glycolysis; D-glyceraldehyde 3-phosphate from glycerone phosphate: step 1/1. Involved in the gluconeogenesis. Catalyzes stereospecifically the conversion of dihydroxyacetone phosphate (DHAP) to D-glyceraldehyde-3-phosphate (G3P). The chain is Triosephosphate isomerase from Chloroflexus aurantiacus (strain ATCC 29366 / DSM 635 / J-10-fl).